The sequence spans 485 residues: Glutamyl-tRNA(Gln) amidotransferase subunit A (485 aa).

Active-site charge relay system residues include lysine 79 and serine 154. The active-site Acyl-ester intermediate is serine 178.

This sequence belongs to the amidase family. GatA subfamily. As to quaternary structure, heterotrimer of A, B and C subunits.

It catalyses the reaction L-glutamyl-tRNA(Gln) + L-glutamine + ATP + H2O = L-glutaminyl-tRNA(Gln) + L-glutamate + ADP + phosphate + H(+). Allows the formation of correctly charged Gln-tRNA(Gln) through the transamidation of misacylated Glu-tRNA(Gln) in organisms which lack glutaminyl-tRNA synthetase. The reaction takes place in the presence of glutamine and ATP through an activated gamma-phospho-Glu-tRNA(Gln). The sequence is that of Glutamyl-tRNA(Gln) amidotransferase subunit A from Staphylococcus aureus (strain USA300 / TCH1516).